The chain runs to 431 residues: UDP-N-acetylglucosamine 1-carboxyvinyltransferase (431 aa).

22–23 (KN) is a phosphoenolpyruvate binding site. Arg-102 is a binding site for UDP-N-acetyl-alpha-D-glucosamine. Cys-126 acts as the Proton donor in catalysis. The residue at position 126 (Cys-126) is a 2-(S-cysteinyl)pyruvic acid O-phosphothioketal. UDP-N-acetyl-alpha-D-glucosamine-binding residues include Asp-318 and Ile-340.

Belongs to the EPSP synthase family. MurA subfamily.

Its subcellular location is the cytoplasm. It catalyses the reaction phosphoenolpyruvate + UDP-N-acetyl-alpha-D-glucosamine = UDP-N-acetyl-3-O-(1-carboxyvinyl)-alpha-D-glucosamine + phosphate. It functions in the pathway cell wall biogenesis; peptidoglycan biosynthesis. In terms of biological role, cell wall formation. Adds enolpyruvyl to UDP-N-acetylglucosamine. In Bartonella quintana (strain Toulouse) (Rochalimaea quintana), this protein is UDP-N-acetylglucosamine 1-carboxyvinyltransferase.